A 409-amino-acid chain; its full sequence is tRNA-specific 2-thiouridylase MnmA (409 aa).

ATP-binding positions include 40 to 47 and Leu-66; that span reads GLSGGVDS. Catalysis depends on Cys-127, which acts as the Nucleophile. Cys-127 and Cys-237 are joined by a disulfide. Gly-152 contributes to the ATP binding site. An interaction with tRNA region spans residues 187 to 189; that stretch reads KDQ. The active-site Cysteine persulfide intermediate is the Cys-237. Residues 342–343 are interaction with tRNA; that stretch reads RY.

It belongs to the MnmA/TRMU family.

The protein resides in the cytoplasm. It carries out the reaction S-sulfanyl-L-cysteinyl-[protein] + uridine(34) in tRNA + AH2 + ATP = 2-thiouridine(34) in tRNA + L-cysteinyl-[protein] + A + AMP + diphosphate + H(+). Catalyzes the 2-thiolation of uridine at the wobble position (U34) of tRNA, leading to the formation of s(2)U34. The sequence is that of tRNA-specific 2-thiouridylase MnmA from Prochlorococcus marinus (strain MIT 9313).